The sequence spans 257 residues: UPF0246 protein YaaA (257 aa).

It belongs to the UPF0246 family.

This chain is UPF0246 protein YaaA, found in Salmonella choleraesuis (strain SC-B67).